The following is a 993-amino-acid chain: Lateral signaling target protein 2 homolog (993 aa).

Disordered regions lie at residues 340–449, 494–623, 759–813, and 825–902; these read DQRN…DTTD, DGYG…TVVQ, GARH…GDQE, and AVNE…PPAW. Low complexity predominate over residues 343-360; that stretch reads NNNNNINNNSSSSSNSNS. Over residues 372 to 405 the composition is skewed to polar residues; that stretch reads RSPSMLSLSTASPTPSHSIGSTFSAATSSTNPPV. Acidic residues predominate over residues 409 to 448; the sequence is DGDDADDDDDGDDDDEDDDDDVDDDLVGNDDSDDDDDDTT. Residues Ser-525 and Ser-526 each carry the phosphoserine modification. Over residues 535–549 the composition is skewed to polar residues; that stretch reads SHNNTTTIKSPDSDG. Positions 559-608 are enriched in basic residues; it reads SRQRHSHHHHRHHHHHHRHSSHSSHSHHHQHQQHHSQPHPHRTTRSGRKR. The span at 759–801 shows a compositional bias: low complexity; sequence GARHSAGASMQRNHTTIDNNNSTSSSPPDATITTTTTTTTTRS. Residue Ser-808 is modified to Phosphoserine. Composition is skewed to low complexity over residues 842-862 and 884-896; these read SNTP…QNSP and TTAT…GTGT. An FYVE-type zinc finger spans residues 905-965; that stretch reads DGKAPRCMSC…VCRDCYAREI (61 aa). Residues Cys-911, Cys-914, Cys-927, Cys-930, Cys-935, Cys-938, Cys-957, and Cys-960 each contribute to the Zn(2+) site. The segment at 968–993 is disordered; the sequence is SGGGGGGVVQMQRQQAANRPQTASAS. The span at 978–993 shows a compositional bias: polar residues; that stretch reads MQRQQAANRPQTASAS.

This sequence belongs to the lst-2 family.

Functionally, negative regulator of epidermal growth factor receptor (EGFR) signaling. This is Lateral signaling target protein 2 homolog from Drosophila willistoni (Fruit fly).